A 37-amino-acid chain; its full sequence is Cytochrome b6-f complex subunit 5 (37 aa).

The helical transmembrane segment at 5-25 (LLSGIVLGLVPVTIAGLFVTA) threads the bilayer.

Belongs to the PetG family. The 4 large subunits of the cytochrome b6-f complex are cytochrome b6, subunit IV (17 kDa polypeptide, PetD), cytochrome f and the Rieske protein, while the 4 small subunits are PetG, PetL, PetM and PetN. The complex functions as a dimer.

It localises to the plastid. The protein localises to the chloroplast thylakoid membrane. In terms of biological role, component of the cytochrome b6-f complex, which mediates electron transfer between photosystem II (PSII) and photosystem I (PSI), cyclic electron flow around PSI, and state transitions. PetG is required for either the stability or assembly of the cytochrome b6-f complex. This chain is Cytochrome b6-f complex subunit 5, found in Chlorella vulgaris (Green alga).